Here is a 574-residue protein sequence, read N- to C-terminus: 2-succinyl-5-enolpyruvyl-6-hydroxy-3-cyclohexene-1-carboxylate synthase (574 aa).

Belongs to the TPP enzyme family. MenD subfamily. Homodimer. The cofactor is Mg(2+). Requires Mn(2+) as cofactor. Thiamine diphosphate is required as a cofactor.

It catalyses the reaction isochorismate + 2-oxoglutarate + H(+) = 5-enolpyruvoyl-6-hydroxy-2-succinyl-cyclohex-3-ene-1-carboxylate + CO2. It functions in the pathway quinol/quinone metabolism; 1,4-dihydroxy-2-naphthoate biosynthesis; 1,4-dihydroxy-2-naphthoate from chorismate: step 2/7. The protein operates within quinol/quinone metabolism; menaquinone biosynthesis. Functionally, catalyzes the thiamine diphosphate-dependent decarboxylation of 2-oxoglutarate and the subsequent addition of the resulting succinic semialdehyde-thiamine pyrophosphate anion to isochorismate to yield 2-succinyl-5-enolpyruvyl-6-hydroxy-3-cyclohexene-1-carboxylate (SEPHCHC). In Vibrio atlanticus (strain LGP32) (Vibrio splendidus (strain Mel32)), this protein is 2-succinyl-5-enolpyruvyl-6-hydroxy-3-cyclohexene-1-carboxylate synthase.